The sequence spans 128 residues: MTKTPEMTKTAIAHGKYIRGSASKVRRVLDQIRGKSYRDALIMLEFMPYRSTDPITKVLRSAVANAEHNLGMDPSSLVISSASADNGPVMKRFRPRAQGRAFSIKKQTCHISISVESAPNQTNTEAQN.

Belongs to the universal ribosomal protein uL22 family. In terms of assembly, part of the 50S ribosomal subunit.

This protein binds specifically to 23S rRNA; its binding is stimulated by other ribosomal proteins, e.g. L4, L17, and L20. It is important during the early stages of 50S assembly. It makes multiple contacts with different domains of the 23S rRNA in the assembled 50S subunit and ribosome. In terms of biological role, the globular domain of the protein is located near the polypeptide exit tunnel on the outside of the subunit, while an extended beta-hairpin is found that lines the wall of the exit tunnel in the center of the 70S ribosome. This Prochlorococcus marinus subsp. pastoris (strain CCMP1986 / NIES-2087 / MED4) protein is Large ribosomal subunit protein uL22.